The following is an 895-amino-acid chain: Androgen receptor (895 aa).

The modulating stretch occupies residues 1-533; the sequence is MEVQLGLGRV…PIDYYFPPQK (533 aa). The tract at residues 1 to 562 is interaction with ZNF318; the sequence is MEVQLGLGRV…GSCKVFFKRA (562 aa). Disordered regions lie at residues 33 to 150 and 178 to 211; these read VIQN…LSLL and QQQQ…YLEG. 2 stretches are compositionally biased toward low complexity: residues 44–81 and 178–200; these read AASA…GSPQ and QQQQ…ASGA. Ser65 is subject to Phosphoserine; by CDK9. The residue at position 79 (Ser79) is a Phosphoserine. Polar residues predominate over residues 201 to 211; the sequence is PTSSKDNYLEG. Tyr208 bears the Phosphotyrosine; by CSK mark. Ser241 bears the Phosphoserine mark. Tyr252 carries the phosphotyrosine; by CSK and TNK2 modification. A phosphotyrosine; by CSK mark is found at Tyr292, Tyr331, Tyr342, and Tyr347. Residue Tyr348 is modified to Phosphotyrosine; by CSK and TNK2. Lys371 participates in a covalent cross-link: Glycyl lysine isopeptide (Lys-Gly) (interchain with G-Cter in SUMO). Residue Tyr378 is modified to Phosphotyrosine; by CSK. Residue Lys496 forms a Glycyl lysine isopeptide (Lys-Gly) (interchain with G-Cter in SUMO) linkage. Phosphotyrosine; by CSK occurs at positions 510 and 527. An interaction with LPXN region spans residues 527-894; sequence YYFPPQKTCL…GKVKPIYFHT (368 aa). Positions 534–607 form a DNA-binding region, nuclear receptor; it reads TCLICGDEAS…AGMTLGARKL (74 aa). 2 consecutive NR C4-type zinc fingers follow at residues 535–555 and 571–595; these read CLIC…CGSC and CASR…LRKC. Positions 547–637 are interaction with HIPK3; that stretch reads YGALTCGSCK…TEETAQKLTV (91 aa). Positions 567–894 are interaction with CCAR1; the sequence is QKYLCASRND…GKVKPIYFHT (328 aa). The segment at 600 to 894 is interaction with KAT7; that stretch reads MTLGARKLKK…GKVKPIYFHT (295 aa). The residue at position 626 (Ser626) is a Phosphoserine; by STK4/MST1. In terms of domain architecture, NR LBD spans 644 to 875; sequence ECQPIFLNVL…DFPEMMAEII (232 aa). 17beta-hydroxy-5alpha-androstan-3-one-binding residues include Asn681 and Arg728. Residues Lys821 and Lys823 each participate in a glycyl lysine isopeptide (Lys-Gly) (interchain with G-Cter in ubiquitin) cross-link. Residue Thr853 coordinates 17beta-hydroxy-5alpha-androstan-3-one. At Tyr891 the chain carries Phosphotyrosine; by CSK.

The protein belongs to the nuclear hormone receptor family. NR3 subfamily. In terms of assembly, binds DNA as a homodimer. Part of a ternary complex containing AR, EFCAB6/DJBP and PARK7. Interacts with HIPK3 and NR0B2 in the presence of androgen. The ligand binding domain interacts with KAT7/HBO1 in the presence of dihydrotestosterone. Interacts with EFCAB6/DJBP, PQBP1, RANBP9, RBAK, SPDEF, SRA1, TGFB1I1 and RREB1. Interacts with ZMIZ1/ZIMP10 and ZMIZ2/ZMIP7 which both enhance its transactivation activity. Interacts with SLC30A9 and RAD54L2/ARIP4. Interacts with MACROD1 (via macro domain). Interacts via the ligand-binding domain with LXXLL and FXXLF motifs from NCOA1, NCOA2, NCOA3 and MAGEA11. Interacts (via nuclear receptor DNA binding domain and nuclear receptor ligand binding domain) with NCOA4. The AR N-terminal poly-Gln region binds Ran resulting in enhancement of AR-mediated transactivation. Ran-binding decreases as the poly-Gln length increases. Interacts with HIP1 (via coiled coil domain). Interacts (via ligand-binding domain) with TRIM68. Interacts with TNK2. Interacts with USP26. Interacts with RNF6. Interacts (regulated by RNF6 probably through polyubiquitination) with RNF14; regulates AR transcriptional activity. Interacts with PRMT2 and TRIM24. Interacts with RACK1. Interacts with RANBP10; this interaction enhances dihydrotestosterone-induced AR transcriptional activity. Interacts with PRPF6 in a hormone-independent way; this interaction enhances dihydrotestosterone-induced AR transcriptional activity. Interacts with STK4/MST1. Interacts with ZIPK/DAPK3. Interacts with LPXN. Interacts with MAK. Part of a complex containing AR, MAK and NCOA3. Interacts with CRY1. Interacts with CCAR1 and GATA2. Interacts with ZNF318. Interacts with BUD31. Interacts with ARID4A. Interacts with ARID4B. Interacts (via NR LBD domain) with ZBTB7A; the interaction is direct and androgen-dependent. Interacts with NCOR1. Interacts with NCOR2. Interacts with CRY2 in a ligand-dependent manner. Post-translationally, phosphorylated in prostate cancer cells in response to several growth factors including EGF. Phosphorylation is induced by c-Src kinase (CSK). Tyr-510 is one of the major phosphorylation sites and an increase in phosphorylation and Src kinase activity is associated with prostate cancer progression. Phosphorylation by TNK2 enhances the DNA-binding and transcriptional activity. Phosphorylation at Ser-65 by CDK9 regulates AR promoter selectivity and cell growth. In terms of processing, sumoylated on Lys-371 (major) and Lys-496. Ubiquitinated. Deubiquitinated by USP26. 'Lys-6' and 'Lys-27'-linked polyubiquitination by RNF6 modulates AR transcriptional activity and specificity. Palmitoylated by ZDHHC7 and ZDHHC21. Palmitoylation is required for plasma membrane targeting and for rapid intracellular signaling via ERK and AKT kinases and cAMP generation.

It is found in the nucleus. The protein resides in the cytoplasm. In terms of biological role, steroid hormone receptors are ligand-activated transcription factors that regulate eukaryotic gene expression and affect cellular proliferation and differentiation in target tissues. Transcription factor activity is modulated by bound coactivator and corepressor proteins like ZBTB7A that recruits NCOR1 and NCOR2 to the androgen response elements/ARE on target genes, negatively regulating androgen receptor signaling and androgen-induced cell proliferation. Transcription activation is also down-regulated by NR0B2. Activated, but not phosphorylated, by HIPK3 and ZIPK/DAPK3. The protein is Androgen receptor (AR) of Macaca mulatta (Rhesus macaque).